The primary structure comprises 921 residues: Phototropin-1B (921 aa).

A compositionally biased stretch (gly residues) spans 1–11 (MASKGTEGGHG). Disordered stretches follow at residues 1-59 (MASK…SPFL) and 88-118 (TGLP…QSAA). Positions 40–51 (SSASSFRTAAAA) are enriched in low complexity. Positions 97–117 (RPSSGSARTSSEDNPQQQQSA) are enriched in polar residues. The region spanning 123–197 (VSEELRAALS…KIRQSLANGS (75 aa)) is the PAS 1 domain. FMN contacts are provided by residues 172–177 (NCRFLQ), arginine 190, asparagine 205, asparagine 215, and glutamine 236. Residue cysteine 173 is modified to S-4a-FMN cysteine. The PAC 1 domain occupies 197 to 251 (SNYCGRILNYKKDGTPFWNLLTIAPIKDEDGRLLKFIGMQVEVSKYTEGKKDTVV). A compositionally biased stretch (polar residues) spans 286 to 295 (RSLSESSNNT). Disordered regions lie at residues 286–345 (RSLS…QVNR) and 366–391 (EKNM…SFED). Basic and acidic residues-rich tracts occupy residues 312–321 (PSKRSSESGS) and 366–376 (EKNMLKPRDED). In terms of domain architecture, PAS 2 spans 400-473 (RGIDLATTLE…RKIRDAIDNQ (74 aa)). FMN-binding positions include 449–454 (NCRFLQ), arginine 467, asparagine 482, asparagine 492, and glutamine 513. Cysteine 450 carries the S-4a-FMN cysteine modification. In terms of domain architecture, PAC 2 spans 474–528 (AEVTVQLINYTKSGKKFWNLFHLQPMRDQKGDVQYFIGVQLDGTEHVQDDAAKEG). One can recognise a Protein kinase domain in the interval 594 to 881 (FRPVKPLGSG…ANEIKGHPFF (288 aa)). ATP contacts are provided by residues 600-608 (LGSGDTGSV) and lysine 623. Aspartate 719 (proton acceptor) is an active-site residue.

The protein belongs to the protein kinase superfamily. Ser/Thr protein kinase family. Homodimer. Requires FMN as cofactor. In terms of processing, autophosphorylated in response to blue light irradiation. 2 molecules of FMN bind covalently to cysteines after exposure to blue light and are reversed in the dark.

It catalyses the reaction L-seryl-[protein] + ATP = O-phospho-L-seryl-[protein] + ADP + H(+). The catalysed reaction is L-threonyl-[protein] + ATP = O-phospho-L-threonyl-[protein] + ADP + H(+). Protein kinase that acts as a blue light photoreceptor in a signal-transduction pathway for phototropic responses. Regulates a wide range of physiological activities in plants that maximize the efficiency of photosynthesis, such as chloroplast relocations, stomata opening, and leaf expansion. This chain is Phototropin-1B (PHOT1B), found in Oryza sativa subsp. japonica (Rice).